The sequence spans 429 residues: MANVAVVGAQWGDEGKGKVVDWLSERADVVVRFQGGHNAGHTLVINGVTYKLSLLPSGVVRGKLSIIGNGVVIDPWALLAEIERIRAQGVEITPEVLKIAENACLILPLHAHLDKAREEASGTAKIGTTGRGIGPAYEDRVGRRAIRVCDLADEAVLKAKIATLLRHHNALLRGLGAAEVDGAELLAKLLDVAPKILPFADVVWQHLDEVRHTRKRVLFEGAQGAMLDVDHGTYPYVTSSNTVSGNAGTGSGVGPGQVGYVLGICKAYTTRVGEGPFPTELFDEIGKSIGERGHEFGTVTGRPRRCGWFDAVMVRQAVKVGGITGIALTKLDVLDGFKELKICTGYKLDGKVINHFPASMTGQANVEPIYEVIEGWSQSTRGVRSWKDLPATAIKYIRRIEELIEAPVALLSTSPEREDSILVHDPFAT.

Residues 12-18 (GDEGKGK) and 40-42 (GHT) each bind GTP. Aspartate 13 functions as the Proton acceptor in the catalytic mechanism. The Mg(2+) site is built by aspartate 13 and glycine 40. Residues 13–16 (DEGK), 38–41 (NAGH), threonine 129, arginine 143, glutamine 223, threonine 238, and arginine 302 contribute to the IMP site. Catalysis depends on histidine 41, which acts as the Proton donor. Position 298–304 (298–304 (TVTGRPR)) interacts with substrate. GTP is bound by residues arginine 304, 330–332 (KLD), and 412–414 (STS).

It belongs to the adenylosuccinate synthetase family. Homodimer. Mg(2+) serves as cofactor.

The protein resides in the cytoplasm. It catalyses the reaction IMP + L-aspartate + GTP = N(6)-(1,2-dicarboxyethyl)-AMP + GDP + phosphate + 2 H(+). It participates in purine metabolism; AMP biosynthesis via de novo pathway; AMP from IMP: step 1/2. Functionally, plays an important role in the de novo pathway of purine nucleotide biosynthesis. Catalyzes the first committed step in the biosynthesis of AMP from IMP. This Paramagnetospirillum magneticum (strain ATCC 700264 / AMB-1) (Magnetospirillum magneticum) protein is Adenylosuccinate synthetase.